Here is a 269-residue protein sequence, read N- to C-terminus: 2-dehydro-3-deoxyphosphooctonate aldolase (269 aa).

This sequence belongs to the KdsA family.

Its subcellular location is the cytoplasm. It catalyses the reaction D-arabinose 5-phosphate + phosphoenolpyruvate + H2O = 3-deoxy-alpha-D-manno-2-octulosonate-8-phosphate + phosphate. It functions in the pathway carbohydrate biosynthesis; 3-deoxy-D-manno-octulosonate biosynthesis; 3-deoxy-D-manno-octulosonate from D-ribulose 5-phosphate: step 2/3. Its pathway is bacterial outer membrane biogenesis; lipopolysaccharide biosynthesis. The polypeptide is 2-dehydro-3-deoxyphosphooctonate aldolase (Chlamydia caviae (strain ATCC VR-813 / DSM 19441 / 03DC25 / GPIC) (Chlamydophila caviae)).